The chain runs to 1042 residues: Serine/threonine-protein kinase LATS2 (1042 aa).

Residues 23 to 44 (REGLKQPSKASTQGLLVGPNSD) form a disordered region. The segment covering 30 to 44 (SKASTQGLLVGPNSD) has biased composition (polar residues). The residue at position 82 (Ser82) is a Phosphoserine; by AURKA. Positions 97–138 (EVNRQMLQELVNAGCDQEMAGRALKQTGSRSIEAALEYISKM) constitute a UBA domain. An interaction with ubiquitinated AMOTL2 region spans residues 100 to 140 (RQMLQELVNAGCDQEMAGRALKQTGSRSIEAALEYISKMGY). The segment at 237-282 (HFPGTHYGRGHLLSEQPGYGVQRSSSFQNKTPPDAYSSMAKAQGGP) is disordered. Polar residues predominate over residues 258-267 (QRSSSFQNKT). Thr267 is subject to Phosphothreonine. Residue Ser362 is modified to Phosphoserine. 3 disordered regions span residues 378–399 (RAGP…LPAP), 442–481 (PATE…HLLL), and 501–550 (QSLR…KRES). A PPxY motif motif is present at residues 472-475 (PPPY). Positions 507-530 (TEQDRSDKSHKGAKGDKAGRDKKQ) are enriched in basic and acidic residues. Ser534 carries the phosphoserine modification. Basic and acidic residues predominate over residues 541–550 (NSRDEEKRES). The region spanning 626-931 (FVKIKTLGIG…ADDLKAHPFF (306 aa)) is the Protein kinase domain. ATP-binding positions include 632–640 (LGIGAFGEV) and Lys655. The Proton acceptor role is filled by Asp749. The AGC-kinase C-terminal domain maps to 932–1010 (NTIDFSRDIR…RRFFDDNGYP (79 aa)). Thr999 bears the Phosphothreonine mark. The tract at residues 1014 to 1042 (PKPSEPAESADPGDADLEGAAEGCQPVYV) is disordered.

Belongs to the protein kinase superfamily. AGC Ser/Thr protein kinase family. As to quaternary structure, interacts with and is phosphorylated by AURKA. Binds to AR. Interacts with AJUBA during mitosis and this complex regulates organization of the spindle apparatus through recruitment of gamma-tubulin to the centrosome. Interacts (via PPxY motif) with YAP1 (via WW domains). Interacts with MOB1A and MOB1B. Interacts with LIMD1, WTIP and AJUBA. Interacts with SNAI1. Interacts with WWC1, WWC2 and WWC3 (via their WW domains). Interacts (via UBA domain) with ubiquitinated AMOTL2; the interaction promotes LATS2 phosphorylation of YAP1. Mg(2+) is required as a cofactor. In terms of processing, autophosphorylated and phosphorylated during M-phase and the G1/S-phase of the cell cycle. Phosphorylated and activated by STK3/MST2. Phosphorylated by MAP4Ks; in parallel to STK3/MST2 and resulting to its activation. Phosphorylation by NUAK2 may regulate its activity in phosphorylation and inactivation YAP1. In terms of tissue distribution, expressed at high levels in ovary and testis and at lower levels in all other tissues examined.

Its subcellular location is the cytoplasm. It is found in the cytoskeleton. The protein localises to the microtubule organizing center. It localises to the centrosome. The protein resides in the spindle pole. Its subcellular location is the nucleus. It catalyses the reaction L-seryl-[protein] + ATP = O-phospho-L-seryl-[protein] + ADP + H(+). It carries out the reaction L-threonyl-[protein] + ATP = O-phospho-L-threonyl-[protein] + ADP + H(+). Negative regulator of YAP1 in the Hippo signaling pathway that plays a pivotal role in organ size control and tumor suppression by restricting proliferation and promoting apoptosis. The core of this pathway is composed of a kinase cascade wherein STK3/MST2 and STK4/MST1, in complex with its regulatory protein SAV1, phosphorylates and activates LATS1/2 in complex with its regulatory protein MOB1, which in turn phosphorylates and inactivates YAP1 oncoprotein and WWTR1/TAZ. Phosphorylation of YAP1 by LATS2 inhibits its translocation into the nucleus to regulate cellular genes important for cell proliferation, cell death, and cell migration. Also phosphorylates YAP1 in response to cell contact inhibition-driven WWP1 ubiquitination of AMOTL2, which results in LATS2 activation. Acts as a tumor suppressor which plays a critical role in centrosome duplication, maintenance of mitotic fidelity and genomic stability. Negatively regulates G1/S transition by down-regulating cyclin E/CDK2 kinase activity. Negative regulator of the androgen receptor. Phosphorylates SNAI1 in the nucleus leading to its nuclear retention and stabilization, which enhances its epithelial-mesenchymal transition and tumor cell invasion/migration activities. This tumor-promoting activity is independent of its effects upon YAP1 or WWTR1/TAZ. Acts as an activator of the NLRP3 inflammasome by mediating phosphorylation of 'Ser-265' of NLRP3 following NLRP3 palmitoylation, promoting NLRP3 activation by NEK7. This chain is Serine/threonine-protein kinase LATS2, found in Mus musculus (Mouse).